The sequence spans 234 residues: Cytochrome b (234 aa).

A run of 4 helical transmembrane segments spans residues 33 to 53, 77 to 98, 113 to 133, and 178 to 198; these read FGSL…FLAM, WLIR…YMHV, WNIG…GYVL, and FFAF…IHLL. Positions 83 and 97 each coordinate heme b. His-182 and His-196 together coordinate heme b. His-201 is a binding site for a ubiquinone. The chain crosses the membrane as a helical span at residues 226 to 234; it reads IKDVLGFLM.

It belongs to the cytochrome b family. In terms of assembly, the cytochrome bc1 complex contains 11 subunits: 3 respiratory subunits (MT-CYB, CYC1 and UQCRFS1), 2 core proteins (UQCRC1 and UQCRC2) and 6 low-molecular weight proteins (UQCRH/QCR6, UQCRB/QCR7, UQCRQ/QCR8, UQCR10/QCR9, UQCR11/QCR10 and a cleavage product of UQCRFS1). This cytochrome bc1 complex then forms a dimer. It depends on heme b as a cofactor.

It localises to the mitochondrion inner membrane. In terms of biological role, component of the ubiquinol-cytochrome c reductase complex (complex III or cytochrome b-c1 complex) that is part of the mitochondrial respiratory chain. The b-c1 complex mediates electron transfer from ubiquinol to cytochrome c. Contributes to the generation of a proton gradient across the mitochondrial membrane that is then used for ATP synthesis. This chain is Cytochrome b (MT-CYB), found in Lepus alleni (Antelope jackrabbit).